A 374-amino-acid chain; its full sequence is Cyclin-dependent kinase 9 (374 aa).

The Protein kinase domain occupies 19–318 (YEKLAKIGQG…SDDALNHDFF (300 aa)). ATP is bound by residues 25–33 (IGQGTFGEV) and Lys-48. Residue Asp-151 is the Proton acceptor of the active site. The segment at 345–374 (PRRRGHMPQQPANQNRNPATTSQSEFDRVF) is disordered. The segment covering 354–368 (QPANQNRNPATTSQS) has biased composition (polar residues).

The protein belongs to the protein kinase superfamily. CMGC Ser/Thr protein kinase family. CDC2/CDKX subfamily. Component of the super elongation complex (SEC). Associates with ccnt1/cyclin-T1, ccnt2/cyclin-T2 or ccnk/cyclin-K to form active P-TEFb.

It is found in the nucleus. The protein resides in the cytoplasm. Its subcellular location is the PML body. It catalyses the reaction L-seryl-[protein] + ATP = O-phospho-L-seryl-[protein] + ADP + H(+). The enzyme catalyses L-threonyl-[protein] + ATP = O-phospho-L-threonyl-[protein] + ADP + H(+). The catalysed reaction is [DNA-directed RNA polymerase] + ATP = phospho-[DNA-directed RNA polymerase] + ADP + H(+). Protein kinase involved in the regulation of transcription. Member of the cyclin-dependent kinase pair (CDK9/cyclin-T) complex, also called positive transcription elongation factor b (P-TEFb), which facilitates the transition from abortive to productive elongation by phosphorylating the CTD (C-terminal domain) of the large subunit of RNA polymerase II (RNAP II) polr2a, supt5h and rdbp. This complex is inactive when in the 7SK snRNP complex form. Regulates cytokine inducible transcription networks by facilitating promoter recognition of target transcription factors. P-TEFb is also involved in cotranscriptional histone modification, mRNA processing and mRNA export. This chain is Cyclin-dependent kinase 9, found in Danio rerio (Zebrafish).